The sequence spans 136 residues: Large ribosomal subunit protein uL16 (136 aa).

Belongs to the universal ribosomal protein uL16 family. As to quaternary structure, part of the 50S ribosomal subunit.

In terms of biological role, binds 23S rRNA and is also seen to make contacts with the A and possibly P site tRNAs. In Buchnera aphidicola subsp. Baizongia pistaciae (strain Bp), this protein is Large ribosomal subunit protein uL16.